Here is a 379-residue protein sequence, read N- to C-terminus: Eukaryotic translation initiation factor 3 subunit H (379 aa).

Positions 17-170 constitute an MPN domain; sequence VQIDSLVVMK…IRAYRLSTKA (154 aa). Residues 280 to 291 are compositionally biased toward basic and acidic residues; it reads RQAENEQREARG. Residues 280–300 are disordered; it reads RQAENEQREARGEPPLSFDDI.

The protein belongs to the eIF-3 subunit H family. Component of the eukaryotic translation initiation factor 3 (eIF-3) complex.

The protein resides in the cytoplasm. In terms of biological role, component of the eukaryotic translation initiation factor 3 (eIF-3) complex, which is involved in protein synthesis of a specialized repertoire of mRNAs and, together with other initiation factors, stimulates binding of mRNA and methionyl-tRNAi to the 40S ribosome. The eIF-3 complex specifically targets and initiates translation of a subset of mRNAs involved in cell proliferation. The polypeptide is Eukaryotic translation initiation factor 3 subunit H (Brugia malayi (Filarial nematode worm)).